Reading from the N-terminus, the 200-residue chain is dITP/XTP pyrophosphatase (200 aa).

Residue Thr-5–Lys-10 coordinates substrate. Asp-67 functions as the Proton acceptor in the catalytic mechanism. Asp-67 provides a ligand contact to Mg(2+). Residues Ser-68, Phe-151–Asp-154, Lys-174, and His-179–Arg-180 contribute to the substrate site.

The protein belongs to the HAM1 NTPase family. Homodimer. Mg(2+) is required as a cofactor.

The enzyme catalyses XTP + H2O = XMP + diphosphate + H(+). The catalysed reaction is dITP + H2O = dIMP + diphosphate + H(+). It carries out the reaction ITP + H2O = IMP + diphosphate + H(+). Its function is as follows. Pyrophosphatase that catalyzes the hydrolysis of nucleoside triphosphates to their monophosphate derivatives, with a high preference for the non-canonical purine nucleotides XTP (xanthosine triphosphate), dITP (deoxyinosine triphosphate) and ITP. Seems to function as a house-cleaning enzyme that removes non-canonical purine nucleotides from the nucleotide pool, thus preventing their incorporation into DNA/RNA and avoiding chromosomal lesions. This chain is dITP/XTP pyrophosphatase, found in Streptococcus pneumoniae serotype 4 (strain ATCC BAA-334 / TIGR4).